The following is a 1701-amino-acid chain: Merozoite surface protein 1 (1701 aa).

The N-terminal stretch at 1–19 is a signal peptide; sequence MKIIFFLCSFLFFIINTQC. The segment covering 89–100 has biased composition (gly residues); that stretch reads GSGGSVASGGSG. Residues 89–118 are disordered; the sequence is GSGGSVASGGSGNSRRTNPSDNSSDSNTKT. Residues 101–116 show a composition bias toward low complexity; it reads NSRRTNPSDNSSDSNT. Residues asparagine 110 and asparagine 239 are each glycosylated (N-linked (GlcNAc...) asparagine). The disordered stretch occupies residues 322-344; that stretch reads DAENPTTGSKPNPLPENKKKEVE. Asparagine 470, asparagine 536, and asparagine 607 each carry an N-linked (GlcNAc...) asparagine glycan. Residues 704-739 are disordered; sequence SETTEDGGHSTHTLSQSGETEVTEETEVTEETVGHT. Over residues 724-733 the composition is skewed to acidic residues; that stretch reads EVTEETEVTE. 7 N-linked (GlcNAc...) asparagine glycosylation sites follow: asparagine 802, asparagine 899, asparagine 919, asparagine 965, asparagine 991, asparagine 1089, and asparagine 1196. Low complexity predominate over residues 889–927; the sequence is TGTSSTSSPGNTTVNTAQSATHSNSQNQQSNASSTNTQN. Positions 889-936 are disordered; it reads TGTSSTSSPGNTTVNTAQSATHSNSQNQQSNASSTNTQNGVAVSSGPA. Disordered regions lie at residues 1230-1259 and 1451-1472; these read TPPQ…TQIP and KEKF…DEQK. Residues 1245–1259 are compositionally biased toward polar residues; sequence VSGSSGSTKEETQIP. Over residues 1456-1465 the composition is skewed to pro residues; sequence SSPPTTPPSP. The N-linked (GlcNAc...) asparagine glycan is linked to asparagine 1588. 2 EGF-like domains span residues 1592-1632 and 1633-1680; these read HQCV…VENP and NPTC…IFCS. 6 disulfide bridges follow: cysteine 1594–cysteine 1605, cysteine 1599–cysteine 1615, cysteine 1617–cysteine 1628, cysteine 1636–cysteine 1649, cysteine 1643–cysteine 1663, and cysteine 1665–cysteine 1679. Serine 1680 carries the GPI-anchor amidated serine lipid modification. The propeptide at 1681–1701 is removed in mature form; that stretch reads SSNFLGISFLLILMLILYSFI.

In terms of assembly, forms a complex composed of subunits p83, p30, p38, and p42 which remain non-covalently associated; the complex is formed at the merozoite surface prior to egress from host erythrocytes. Forms a complex composed of processed MSP1 subunits, MSP6 subunit p36 and MSP7; the complex is formed at the merozoite surface prior to egress from host erythrocytes. Within the complex, interacts (via subunit p38) with MSP6 subunit p36 and (via subunits p83, p30 and p38) with MSP7 (via subunit p22). Forms a complex composed of MSP1, MSP6, DBLMSP1 and DBLMSP2. Within the complex, interacts (via subunit p38) with DBLMSP1 and DBLMSP2. Forms a complex composed of MSP1, and rhoptry proteins RhopH3, RAP1 and CLAG9/RhopH3. Within the complex, interacts (via subunits p42 and p19) with RhopH3 (via C-terminus). Forms a complex composed of MSP1, MSP6, MSP7, MSP9 and MSP3; within the complex, MSP6 and MSP9 mediate the binding to the host erythrocyte. Interacts (via subunits p19 and p42) with MSP9; the interaction is direct; MSP1 subunits p19 or p42, and MSP9 form a co-ligand complex that interacts with host SLC4A1/Band 3 protein. May interact with PFD6. Interacts with host spectrin. As to quaternary structure, interacts with host glycophorin GYPA in a sialic acid-independent manner. Interacts with host proinflammatory cytokine S100P; the interaction blocks S100P inflammatory and chemotactic activities. In terms of assembly, interacts with host SLC4A1/Band 3 (via 5ABC region) on the host erythrocyte surface in a sialic acid-independent manner. Post-translationally, the p190 precursor is cleaved by SUB1 prior to merozoite egress into 4 subunits p83, p30, p38, and p42 which remain non-covalently associated. SUB1-mediated proteolytic cleavage occurs in an orderly manner; the first cleavage occurs at the p30/p38 site, followed by cleavage at the p83/p30 site, the last cleavage occurs at the p38/p42 site. The order of cleavage is essential for parasite viability. SUB1-mediated processing is essential for merozoite egress. In a second processing step during erythrocyte invasion, p42 is cleaved by SUB2 into p33 and p19; the latter remains attached to the merozoite surface via its GPI-anchor and is endocytosed during the subsequent ring stage.

The protein localises to the cell membrane. It is found in the secreted. It localises to the vacuole membrane. During the asexual blood stage, involved in merozoite egress from host erythrocytes possibly via its interaction with the host cytoskeleton protein spectrin resulting in the destabilization of the host cytoskeleton and thus leading to erythrocyte cell membrane rupture. Involved in the binding to host erythrocytes and is required for host erythrocyte invasion. Functionally, by binding to host proinflammatory cytokine S100P may interfere with host immune responses. Its function is as follows. Involved in merozoite invasion of host erythrocytes. May play a role in the biogenesis and/or function of the food vacuole during the intraerythrocytic development. The protein is Merozoite surface protein 1 of Plasmodium falciparum (isolate mad20 / Papua New Guinea).